Consider the following 427-residue polypeptide: Probable transcription factor At5g28040 (427 aa).

The segment at 1 to 81 is disordered; the sequence is MASDQRDTDF…APATKSSSGT (81 aa). Serine 14 is modified (phosphoserine). Over residues 22–32 the composition is skewed to gly residues; it reads GGGGGGRGGGE. The segment covering 33 to 62 has biased composition (acidic residues); sequence TESDEDVVIPEPNEAEDDDHDPDPDPEYED.

It belongs to the GeBP family.

The chain is Probable transcription factor At5g28040 from Arabidopsis thaliana (Mouse-ear cress).